The following is a 280-amino-acid chain: Chlorophyll a-b binding protein CP26, chloroplastic (280 aa).

Residues 1 to 48 (MASLGVSEMLGTPLNFRAVSRSSAPLASSPSTFKTVALFSKKKPAPAK) constitute a chloroplast transit peptide. Phenylalanine 70 contributes to the chlorophyll b binding site. 3 residues coordinate chlorophyll a: tyrosine 95, glutamate 114, and histidine 117. A run of 2 helical transmembrane segments spans residues 110–130 (YQAF…GFII) and 167–187 (IPIN…GAEY). Positions 119, 167, 186, and 189 each coordinate chlorophyll b. Chlorophyll a contacts are provided by lysine 224, glutamate 225, asparagine 228, arginine 230, glutamine 242, and histidine 257. Residues 231 to 251 (LAMFAMLGFFIQAYVTGEGPV) form a helical membrane-spanning segment.

Belongs to the light-harvesting chlorophyll a/b-binding (LHC) protein family. Forms heterotrimers with LHCB3. The LHC complex consists of chlorophyll a-b binding proteins. The cofactor is Binds at least 14 chlorophylls (8 Chl-a and 6 Chl-b) and carotenoids such as lutein and neoxanthin.. Post-translationally, photoregulated by reversible phosphorylation of its threonine residues.

The protein localises to the plastid. Its subcellular location is the chloroplast thylakoid membrane. Functionally, the light-harvesting complex (LHC) functions as a light receptor, it captures and delivers excitation energy to photosystems with which it is closely associated. The protein is Chlorophyll a-b binding protein CP26, chloroplastic (LHCB5) of Arabidopsis thaliana (Mouse-ear cress).